The following is a 52-amino-acid chain: Rubredoxin (52 aa).

The Rubredoxin-like domain occupies methionine 1–isoleucine 52. The Fe cation site is built by cysteine 6, cysteine 9, cysteine 39, and cysteine 42.

This sequence belongs to the rubredoxin family. The cofactor is Fe(3+).

Functionally, rubredoxin is a small nonheme, iron protein lacking acid-labile sulfide. Its single Fe, chelated to 4 Cys, functions as an electron acceptor and may also stabilize the conformation of the molecule. The polypeptide is Rubredoxin (Thermoanaerobacterium thermosaccharolyticum (strain ATCC 7956 / DSM 571 / NCIMB 9385 / NCA 3814 / NCTC 13789 / WDCM 00135 / 2032) (Clostridium thermosaccharolyticum)).